Consider the following 80-residue polypeptide: Protein UL148A (80 aa).

A helical membrane pass occupies residues 10-30 (WIPVCVVVVMTSVVLFAGLHV).

It is found in the host membrane. Functionally, plays a role in the down-regulation of the host NKG2D ligand MICA by utilizing the lysosomal pathway for its degradation. In turn, MICA reduction diminishes NK-cell killing of HCMV-infected cells. This is Protein UL148A (UL148A) from Human cytomegalovirus (strain Merlin) (HHV-5).